We begin with the raw amino-acid sequence, 236 residues long: Exosome complex component Rrp4 (236 aa).

Residues 64–133 form the S1 motif domain; the sequence is GDKVIGKIIE…EIKESWLTLK (70 aa). The KH domain maps to 141–199; the sequence is EGGHMVLIHASRVPRVIGKGGGMVNMVKELTSTRIIIGQNGLIWIDGPIEGVTMAIAAI.

This sequence belongs to the RRP4 family. In terms of assembly, component of the archaeal exosome complex. Forms a trimer of Rrp4 and/or Csl4 subunits. The trimer associates with a hexameric ring-like arrangement composed of 3 Rrp41-Rrp42 heterodimers.

The protein resides in the cytoplasm. In terms of biological role, non-catalytic component of the exosome, which is a complex involved in RNA degradation. Increases the RNA binding and the efficiency of RNA degradation. Confers strong poly(A) specificity to the exosome. The polypeptide is Exosome complex component Rrp4 (Thermoplasma volcanium (strain ATCC 51530 / DSM 4299 / JCM 9571 / NBRC 15438 / GSS1)).